A 330-amino-acid chain; its full sequence is Holliday junction branch migration complex subunit RuvB (330 aa).

Positions 1–181 (MEDRLVGCRL…FGVINKLELY (181 aa)) are large ATPase domain (RuvB-L). ATP is bound by residues leucine 20, arginine 21, glycine 62, lysine 65, threonine 66, threonine 67, 128-130 (EDY), arginine 171, tyrosine 181, and arginine 218. Threonine 66 provides a ligand contact to Mg(2+). The segment at 182–252 (SVEELGQIVK…IARTGLEALE (71 aa)) is small ATPAse domain (RuvB-S). The tract at residues 255-330 (EIGLDAVDRN…AYEHFGLKYE (76 aa)) is head domain (RuvB-H). Residues lysine 310 and arginine 315 each coordinate DNA.

It belongs to the RuvB family. In terms of assembly, homohexamer. Forms an RuvA(8)-RuvB(12)-Holliday junction (HJ) complex. HJ DNA is sandwiched between 2 RuvA tetramers; dsDNA enters through RuvA and exits via RuvB. An RuvB hexamer assembles on each DNA strand where it exits the tetramer. Each RuvB hexamer is contacted by two RuvA subunits (via domain III) on 2 adjacent RuvB subunits; this complex drives branch migration. In the full resolvosome a probable DNA-RuvA(4)-RuvB(12)-RuvC(2) complex forms which resolves the HJ.

The protein localises to the cytoplasm. The catalysed reaction is ATP + H2O = ADP + phosphate + H(+). Its function is as follows. The RuvA-RuvB-RuvC complex processes Holliday junction (HJ) DNA during genetic recombination and DNA repair, while the RuvA-RuvB complex plays an important role in the rescue of blocked DNA replication forks via replication fork reversal (RFR). RuvA specifically binds to HJ cruciform DNA, conferring on it an open structure. The RuvB hexamer acts as an ATP-dependent pump, pulling dsDNA into and through the RuvAB complex. RuvB forms 2 homohexamers on either side of HJ DNA bound by 1 or 2 RuvA tetramers; 4 subunits per hexamer contact DNA at a time. Coordinated motions by a converter formed by DNA-disengaged RuvB subunits stimulates ATP hydrolysis and nucleotide exchange. Immobilization of the converter enables RuvB to convert the ATP-contained energy into a lever motion, pulling 2 nucleotides of DNA out of the RuvA tetramer per ATP hydrolyzed, thus driving DNA branch migration. The RuvB motors rotate together with the DNA substrate, which together with the progressing nucleotide cycle form the mechanistic basis for DNA recombination by continuous HJ branch migration. Branch migration allows RuvC to scan DNA until it finds its consensus sequence, where it cleaves and resolves cruciform DNA. This chain is Holliday junction branch migration complex subunit RuvB, found in Acetivibrio thermocellus (strain ATCC 27405 / DSM 1237 / JCM 9322 / NBRC 103400 / NCIMB 10682 / NRRL B-4536 / VPI 7372) (Clostridium thermocellum).